An 889-amino-acid chain; its full sequence is MPKTNSSAASTNANPSSLQQHTPMMQQYLKIKAEHPDILLFYRMGDFYELFFDDAKKAAELLDISLTARGKSGGNAIPMAGVPYHAVENYLARLVKMGQSVAIVEQVGDPATSKGPVERKVQRIVTPGTVSDEALLNDKQDSILAAVFCPTQKANQELIFGYATLDVTSGRFTLCELSGEEALAAELQRTNPVELLYPDDFAYSHLINQRKGLRRRPQWEFDLQTATNQLTSQFGTNELSGFGVQNHQVGICAAGCVMQYIKDTQRSALPHIDRIVLESHNDTVVMDAATRRNLELTFNLSGGIENTLASILDKTSTPMGSRLLQRWIHRPLTDVTVLKKRQRNIQGLMESPYTQLQSALKKIGDMQRVLARLALRSARPRDFARLRQAFALLPDIQHYLEHEISHTSESAQPSDLLHLAEKISQYPDFADLLERAVIEAPPVLIRDGGVIKEGYNEELDRLRELSKGATDYLEELELREKERTGIASLKVGYNRVHGYFIEVSRSQSDLVPVEYVRRQTLKNNERYIIPELKEHEDNVLSSQSRSLALEKRLYDELFDLLLPQLTQLMQSADALAELDVLTNLAERAESLDYHRPELCPQSGIHFSQGRHPVVEQVSDAPFIANPINVNPDRRMLVITGPNMGGKSTYMRQTALIVLMAYIGSYIPAQDAQIGPIDRIFTRIGASDDLASGRSTFMVEMTETANILNNATANSLVLMDEIGRGTSTYDGLSLAWACAEYLATKLQSFTLFATHYFELTGLADALPELANVHLDAVEHGESIRFMHAVQDGAANKSYGLQVAQLAGVPKLVVQAAKRKLHELETGDISKQGRQETSPVNTVYATEKVETQLDLLSQTSEAEDLLHSIQPDDLTPKQALDYLYQLKKLVR.

Over residues 1–17 the composition is skewed to low complexity; the sequence is MPKTNSSAASTNANPSS. The disordered stretch occupies residues 1-20; the sequence is MPKTNSSAASTNANPSSLQQ. 640-647 is a binding site for ATP; sequence GPNMGGKS.

Belongs to the DNA mismatch repair MutS family.

In terms of biological role, this protein is involved in the repair of mismatches in DNA. It is possible that it carries out the mismatch recognition step. This protein has a weak ATPase activity. The polypeptide is DNA mismatch repair protein MutS (Pseudoalteromonas atlantica (strain T6c / ATCC BAA-1087)).